We begin with the raw amino-acid sequence, 77 residues long: Dermatoxin-B1 (77 aa).

The signal sequence occupies residues 1-22 (MAFLKKSLFLVLFLGLVPLSLC). The propeptide occupies 23–42 (ESEKREGENEEEQEDDQSEE). The tract at residues 24 to 45 (SEKREGENEEEQEDDQSEEKRS) is disordered. The span at 30-40 (ENEEEQEDDQS) shows a compositional bias: acidic residues. The residue at position 76 (Gln-76) is a Glutamine amide.

Belongs to the frog skin active peptide (FSAP) family. Dermatoxin subfamily. As to expression, highest expression in skin and to a lesser extent in brain and intestine.

It localises to the secreted. It is found in the target cell membrane. Its function is as follows. Possesses a potent antimicrobial activity against Gram-positive bacteria B.megaterium, C.glutamicum and S.aureus and mollicutes A.laidlawii and S.melliferum. Less active against Gram-negative bacteria B.cepacia, P.aeruginosa, S.typhimurium and S.meliloti. Probably acts by disturbing membrane functions with its amphipathic structure. This chain is Dermatoxin-B1, found in Phyllomedusa bicolor (Two-colored leaf frog).